We begin with the raw amino-acid sequence, 171 residues long: Probable chorismate pyruvate-lyase (171 aa).

Met36, Arg78, Leu116, and Glu157 together coordinate substrate.

The protein belongs to the UbiC family.

It is found in the cytoplasm. It catalyses the reaction chorismate = 4-hydroxybenzoate + pyruvate. It participates in cofactor biosynthesis; ubiquinone biosynthesis. In terms of biological role, removes the pyruvyl group from chorismate, with concomitant aromatization of the ring, to provide 4-hydroxybenzoate (4HB) for the ubiquinone pathway. The protein is Probable chorismate pyruvate-lyase of Bartonella bacilliformis (strain ATCC 35685 / KC583 / Herrer 020/F12,63).